Consider the following 332-residue polypeptide: MTASSRPAEYRDVRTANLNTITFDNLFDKDEAELKRLIESCEKDGFFYLDLKSAASQKFWNDLYTIDSTTKDWFKQPIEKKLQTPTVSLAHGFKAVGNQSGSIESKKDGFEALKIGKSELDGRWALPDVVSDNLPLFDQFASSCHFISKLLLDCLSDGLNLKGDARFETHHRDDCRSKSTLYFLHYPPGAQDPNKVGQNMHTDIGTLTILYAPQWGLQVFSPADGAWEYVEPRPNQIIVNVGDTLRFLSGKRFKSALHRVLPLGGIQIEDRYSISYFLRASDSTEFKDSDEDESNAKQWYTKKYAMYEMPHVIQKQQTTLSGGMAQELQATF.

The Fe2OG dioxygenase domain occupies 176–280 (RSKSTLYFLH…RYSISYFLRA (105 aa)). Residues H201, D203, and H258 each contribute to the Fe cation site. R271 contributes to the 2-oxoglutarate binding site.

This sequence belongs to the iron/ascorbate-dependent oxidoreductase family. Requires Fe(2+) as cofactor.

It participates in mycotoxin biosynthesis. In terms of biological role, 2-oxoglutarate-dependent dioxygenase; part of the gene cluster that mediates the biosynthesis of butenolide, a mycotoxin that shows antibiotic activity but does not seem to play a major role in the spread of head blight in wheat. Butenolide is derived from glutamic acid via a 4-acetamido-2-butenoic acid intermediate. The predicted function of the NADH:flavin oxidoreductase FG08077, the cytochrome P450 monooxygenase FG08079, the decarboxylase FG08083, and the putative acetyltransferase FG08082 are consistent with this pathway, however, the respective activities of the butelonide biosynthesis cluster enzymes have still to be experimentally determined. The chain is 2-oxoglutarate-dependent dioxygenase FG08081 from Gibberella zeae (strain ATCC MYA-4620 / CBS 123657 / FGSC 9075 / NRRL 31084 / PH-1) (Wheat head blight fungus).